Reading from the N-terminus, the 229-residue chain is Large ribosomal subunit protein uL1 (229 aa).

It belongs to the universal ribosomal protein uL1 family. In terms of assembly, part of the 50S ribosomal subunit.

Its function is as follows. Binds directly to 23S rRNA. The L1 stalk is quite mobile in the ribosome, and is involved in E site tRNA release. Functionally, protein L1 is also a translational repressor protein, it controls the translation of the L11 operon by binding to its mRNA. This Clostridium tetani (strain Massachusetts / E88) protein is Large ribosomal subunit protein uL1.